We begin with the raw amino-acid sequence, 252 residues long: Uridylate kinase (252 aa).

20-23 contacts ATP; that stretch reads KLSG. The segment at 28 to 33 is involved in allosteric activation by GTP; the sequence is GGGGLG. Gly-62 contacts UMP. ATP contacts are provided by Gly-63 and Arg-67. Residues Asp-82 and 143-150 each bind UMP; that span reads MGMPYFST. Residues Asn-171, Tyr-177, and Asp-180 each contribute to the ATP site.

This sequence belongs to the UMP kinase family. In terms of assembly, homohexamer.

The protein resides in the cytoplasm. It carries out the reaction UMP + ATP = UDP + ADP. It participates in pyrimidine metabolism; CTP biosynthesis via de novo pathway; UDP from UMP (UMPK route): step 1/1. Allosterically activated by GTP. Inhibited by UTP. In terms of biological role, catalyzes the reversible phosphorylation of UMP to UDP. The chain is Uridylate kinase from Streptomyces avermitilis (strain ATCC 31267 / DSM 46492 / JCM 5070 / NBRC 14893 / NCIMB 12804 / NRRL 8165 / MA-4680).